A 256-amino-acid chain; its full sequence is 2,3,4,5-tetrahydropyridine-2,6-dicarboxylate N-acetyltransferase (256 aa).

Belongs to the transferase hexapeptide repeat family. DapH subfamily.

It carries out the reaction (S)-2,3,4,5-tetrahydrodipicolinate + acetyl-CoA + H2O = L-2-acetamido-6-oxoheptanedioate + CoA. It participates in amino-acid biosynthesis; L-lysine biosynthesis via DAP pathway; LL-2,6-diaminopimelate from (S)-tetrahydrodipicolinate (acetylase route): step 1/3. In terms of biological role, catalyzes the transfer of an acetyl group from acetyl-CoA to tetrahydrodipicolinate. This chain is 2,3,4,5-tetrahydropyridine-2,6-dicarboxylate N-acetyltransferase, found in Lactococcus lactis subsp. lactis (strain IL1403) (Streptococcus lactis).